The following is a 187-amino-acid chain: Putative glutathione-dependent formaldehyde-activating enzyme (187 aa).

Positions phenylalanine 20 to aspartate 166 constitute a CENP-V/GFA domain. Zn(2+) is bound by residues cysteine 27, cysteine 29, cysteine 48, cysteine 50, cysteine 53, cysteine 95, and cysteine 98.

The protein belongs to the Gfa family. Requires Zn(2+) as cofactor.

The enzyme catalyses S-(hydroxymethyl)glutathione = glutathione + formaldehyde. It participates in one-carbon metabolism; formaldehyde degradation; formate from formaldehyde (glutathione route): step 1/3. Functionally, catalyzes the condensation of formaldehyde and glutathione to S-hydroxymethylglutathione. This is Putative glutathione-dependent formaldehyde-activating enzyme from Verticillium alfalfae (strain VaMs.102 / ATCC MYA-4576 / FGSC 10136) (Verticillium wilt of alfalfa).